A 479-amino-acid chain; its full sequence is Calcium uniporter protein, mitochondrial (479 aa).

The transit peptide at 1-54 (MNHALRRATLGLSPGLRASRLQQSFAKHQIPAVYRCEAASTPLQRAFTTSRCFR) directs the protein to the mitochondrion. The Mitochondrial matrix portion of the chain corresponds to 55 to 323 (QETAAESEKD…DTLAHQGAHR (269 aa)). Disordered stretches follow at residues 56–125 (ETAA…KGRL) and 206–238 (EADQ…HEGP). A coiled-coil region spans residues 59–79 (AESEKDDAARREEQSERARKR). Over residues 60–75 (ESEKDDAARREEQSER) the composition is skewed to basic and acidic residues. Polar residues predominate over residues 83-93 (NVTSGSSAQTL). 2 stretches are compositionally biased toward basic and acidic residues: residues 94 to 122 (ENDR…DMKK) and 206 to 224 (EADQ…KKDN). The chain crosses the membrane as a helical span at residues 324-344 (LAQGGFAALAGWWGVVYYVTF). Topologically, residues 345–354 (HTQAGWDLVE) are mitochondrial intermembrane. The Selectivity filter signature appears at 350–358 (WDLVEPVTY). Glu-354 provides a ligand contact to Ca(2+). A helical membrane pass occupies residues 355 to 375 (PVTYLAGLTTVMGAYLWFLYI). Over 376–479 (SRDLSYKAAM…GSSDKIKKKQ (104 aa)) the chain is Mitochondrial matrix. Residues 445-462 (KVLEEEKQGRDGTKVTEG) show a composition bias toward basic and acidic residues. The disordered stretch occupies residues 445 to 479 (KVLEEEKQGRDGTKVTEGKDEDDGPGSSDKIKKKQ).

This sequence belongs to the MCU (TC 1.A.77) family. In terms of assembly, homotetramer, assembles in a dimer or dimers configuration with two interfaces.

The protein resides in the mitochondrion inner membrane. The enzyme catalyses Ca(2+)(in) = Ca(2+)(out). Functionally, highly selective calcium channel localized to the inner mitochondrial membrane, which mediates calcium uptake into the mitochondrial matrix. Mitochondrial calcium homeostasis plays key roles in cellular physiology and regulates ATP production, cytoplasmic calcium signals and activation of cell death pathways. Sufficient to operate as a pore-forming channel without the need of calcium-sensor or auxiliary subunit. The sequence is that of Calcium uniporter protein, mitochondrial from Gibberella zeae (strain ATCC MYA-4620 / CBS 123657 / FGSC 9075 / NRRL 31084 / PH-1) (Wheat head blight fungus).